The primary structure comprises 130 residues: Small ribosomal subunit protein uS11 (130 aa).

This sequence belongs to the universal ribosomal protein uS11 family. As to quaternary structure, part of the 30S ribosomal subunit. Interacts with proteins S7 and S18. Binds to IF-3.

Located on the platform of the 30S subunit, it bridges several disparate RNA helices of the 16S rRNA. Forms part of the Shine-Dalgarno cleft in the 70S ribosome. The polypeptide is Small ribosomal subunit protein uS11 (Shewanella violacea (strain JCM 10179 / CIP 106290 / LMG 19151 / DSS12)).